The following is a 147-amino-acid chain: Large ribosomal subunit protein uL13 (147 aa).

Belongs to the universal ribosomal protein uL13 family. As to quaternary structure, part of the 50S ribosomal subunit.

This protein is one of the early assembly proteins of the 50S ribosomal subunit, although it is not seen to bind rRNA by itself. It is important during the early stages of 50S assembly. The chain is Large ribosomal subunit protein uL13 from Leuconostoc mesenteroides subsp. mesenteroides (strain ATCC 8293 / DSM 20343 / BCRC 11652 / CCM 1803 / JCM 6124 / NCDO 523 / NBRC 100496 / NCIMB 8023 / NCTC 12954 / NRRL B-1118 / 37Y).